The sequence spans 105 residues: Putative thioredoxin-5 (105 aa).

The Thioredoxin domain occupies 1-104 (MYKEPKNESE…VALENMVKKL (104 aa)). Active-site nucleophile residues include cysteine 30 and cysteine 33. A disulfide bridge connects residues cysteine 30 and cysteine 33.

Belongs to the thioredoxin family.

Its function is as follows. Participates in various redox reactions through the reversible oxidation of its active center dithiol to a disulfide and catalyzes dithiol-disulfide exchange reactions. This Dictyostelium discoideum (Social amoeba) protein is Putative thioredoxin-5 (trxE).